The following is an 862-amino-acid chain: Active breakpoint cluster region-related protein (862 aa).

Residues 29-84 are disordered; that stretch reads YDAEGNEEHKNSREGSETMPYIDESPTMSPQLSARSQDSVDGVSPTPTEVLLPGGE. Over residues 34 to 44 the composition is skewed to basic and acidic residues; the sequence is NEEHKNSREGS. Positions 54 to 67 are enriched in polar residues; it reads PTMSPQLSARSQDS. Residues 93 to 286 form the DH domain; that stretch reads MRKLVLSGVL…QNFLSSINED (194 aa). Residues 303–462 form the PH domain; it reads QLVKDGFLVE…WREAIQKLQK (160 aa). Positions 488–616 constitute a C2 domain; the sequence is VHNVPIISHK…QSKNWHDDVI (129 aa). A Rho-GAP domain is found at 650–848; the sequence is VKISVVTKRE…YYLQHPPISF (199 aa).

It is found in the cell projection. The protein resides in the dendritic spine. The protein localises to the axon. Its subcellular location is the synapse. Protein with a unique structure having two opposing regulatory activities toward small GTP-binding proteins. The C-terminus is a GTPase-activating protein domain which stimulates GTP hydrolysis by RAC1, RAC2 and CDC42. Accelerates the intrinsic rate of GTP hydrolysis of RAC1 or CDC42, leading to down-regulation of the active GTP-bound form. The central Dbl homology (DH) domain functions as guanine nucleotide exchange factor (GEF) that modulates the GTPases CDC42, RHOA and RAC1. Promotes the conversion of CDC42, RHOA and RAC1 from the GDP-bound to the GTP-bound form. In Xenopus laevis (African clawed frog), this protein is Active breakpoint cluster region-related protein (abr).